The sequence spans 260 residues: MALDGDKSLCTSSTQPLIPVAHIRPLPAGVQTVSPRPEEPSITRPPPSFQASVNRESGARVVVPIAPTYRSPGPSPYSPPPAAPEAKHVEEPPTARPAMEPRNVSSLPGASGPSDLHPYPVPKVAPKPSRSGWTRLKKQLMEEAKEPAFPELKPNLEPMQPEVPAPVVGLQPPASRASRMWDAVLYRMSLAESHRDHPVGPGDRGHPLACLNRLPFLCRPRFNARKLQEVVRPPPTFHPILELHSRPKNFNRTAEGWRLQ.

A disordered region spans residues G29–G132. The span at G73 to A83 shows a compositional bias: pro residues.

This Mus musculus (Mouse) protein is Proline-rich protein 33 (Prr33).